The primary structure comprises 82 residues: Small ribosomal subunit protein bS16 (82 aa).

This sequence belongs to the bacterial ribosomal protein bS16 family.

This chain is Small ribosomal subunit protein bS16, found in Yersinia enterocolitica serotype O:8 / biotype 1B (strain NCTC 13174 / 8081).